The following is a 329-amino-acid chain: uncharacterized protein (329 aa).

Helical transmembrane passes span 13–35 and 229–248; these read IPVL…WATI and VIPA…SVVY.

The protein resides in the cell membrane. This is an uncharacterized protein from Archaeoglobus fulgidus (strain ATCC 49558 / DSM 4304 / JCM 9628 / NBRC 100126 / VC-16).